The following is a 202-amino-acid chain: Nucleoside triphosphate pyrophosphatase (202 aa).

D79 acts as the Proton acceptor in catalysis.

It belongs to the Maf family. A divalent metal cation is required as a cofactor.

The protein localises to the cytoplasm. It catalyses the reaction a ribonucleoside 5'-triphosphate + H2O = a ribonucleoside 5'-phosphate + diphosphate + H(+). The enzyme catalyses a 2'-deoxyribonucleoside 5'-triphosphate + H2O = a 2'-deoxyribonucleoside 5'-phosphate + diphosphate + H(+). In terms of biological role, nucleoside triphosphate pyrophosphatase. May have a dual role in cell division arrest and in preventing the incorporation of modified nucleotides into cellular nucleic acids. This Rhodopseudomonas palustris (strain HaA2) protein is Nucleoside triphosphate pyrophosphatase.